The following is a 182-amino-acid chain: Adenine phosphoribosyltransferase (182 aa).

It belongs to the purine/pyrimidine phosphoribosyltransferase family. In terms of assembly, homodimer.

Its subcellular location is the cytoplasm. The catalysed reaction is AMP + diphosphate = 5-phospho-alpha-D-ribose 1-diphosphate + adenine. The protein operates within purine metabolism; AMP biosynthesis via salvage pathway; AMP from adenine: step 1/1. In terms of biological role, catalyzes a salvage reaction resulting in the formation of AMP, that is energically less costly than de novo synthesis. The sequence is that of Adenine phosphoribosyltransferase from Campylobacter jejuni subsp. doylei (strain ATCC BAA-1458 / RM4099 / 269.97).